The following is a 444-amino-acid chain: MSKTYHFIGIKGSGMSALALMLYQMGHKVQGSDVEKYYFTQRGLEQAGITILPFDEKNLDGDMEIIAGNAFRPDNNVEIAYADQNGISYKRYHEFLGSFMRDFVSMGVAGAHGKTSTTGMLSHVLSHITDTSFLIGDGTGRGSANAKYFVFESDEYERHFMPYHPEYSIITNIDFDHPDYFTSLEDVFNAFNDYAKQITKGLFVYGEDAELRKITSDAPIYYYGFEAEGNDFVASDLLRSTTGSTFTVHFRGQNLGQFHIPTFGRHNIMNATAVIGLLYTAGFDLNLVREHLKTFSGVKRRFTEKIVNDTVIIDDFAHHPTEIIATLDAARQKYPSKEIVAVFQPHTFTRTIALLDDFAHALNQADAVYLAQIYGSAREVDHGDVKVEDLANKINKKHQVITVENVSPLLDHDNAVYVFMGAGDIQTYEYSFERLLSNLTSNVQ.

Residue 110–116 (GAHGKTS) participates in ATP binding.

This sequence belongs to the MurCDEF family.

It is found in the cytoplasm. It catalyses the reaction UDP-N-acetyl-alpha-D-muramate + L-alanine + ATP = UDP-N-acetyl-alpha-D-muramoyl-L-alanine + ADP + phosphate + H(+). It functions in the pathway cell wall biogenesis; peptidoglycan biosynthesis. Cell wall formation. The polypeptide is UDP-N-acetylmuramate--L-alanine ligase (Streptococcus pneumoniae (strain JJA)).